The following is a 428-amino-acid chain: UPF0229 protein YeaH (428 aa).

A compositionally biased stretch (basic and acidic residues) spans 78–90; it reads GNDHFIQNDRIER. The disordered stretch occupies residues 78–111; that stretch reads GNDHFIQNDRIERPQGGGGGGSGSGQGQASQDGE. A compositionally biased stretch (gly residues) spans 92–103; the sequence is QGGGGGGSGSGQ.

Belongs to the UPF0229 family.

This is UPF0229 protein YeaH from Salmonella paratyphi C (strain RKS4594).